A 441-amino-acid polypeptide reads, in one-letter code: Protein C-ets-1 (441 aa).

Lys8 and Lys15 each carry N6-acetyllysine; alternate. Glycyl lysine isopeptide (Lys-Gly) (interchain with G-Cter in SUMO2); alternate cross-links involve residues Lys8 and Lys15. Lys15 participates in a covalent cross-link: Glycyl lysine isopeptide (Lys-Gly) (interchain with G-Cter in SUMO); alternate. Thr38 carries the phosphothreonine; by MAPK modification. Residues 51 to 136 enclose the PNT domain; that stretch reads ATFSGFTKEQ…EHLEILQKED (86 aa). An activation domain; required for transcription activation region spans residues 130–243; sequence EILQKEDVKP…DNMCMGRASR (114 aa). Lys138 is covalently cross-linked (Glycyl lysine isopeptide (Lys-Gly) (interchain with G-Cter in SUMO2)). Tyr223 carries the post-translational modification Phosphotyrosine. Lys227 is covalently cross-linked (Glycyl lysine isopeptide (Lys-Gly) (interchain with G-Cter in SUMO)). Phosphoserine occurs at positions 251 and 254. Residue Thr265 is modified to Phosphothreonine. Residues Ser267, Ser270, Ser282, and Ser285 each carry the phosphoserine modification. Residues 304 to 312 form a helix HI-1 region; sequence FKDYVRDRA. Lys305 is modified (N6-acetyllysine). Positions 323–330 are helix HI-2; it reads AAALAGYT. The segment at residues 335 to 415 is a DNA-binding region (ETS); the sequence is IQLWQFLLEL…AGKRYVYRFV (81 aa). A helix H4 region spans residues 418–422; it reads LQSLL. The segment at 426 to 432 is helix H5; the sequence is PEELHAM.

This sequence belongs to the ETS family. In terms of assembly, binds DNA as a homodimer; homodimerization is required for transcription activation. Interacts with MAF and MAFB. Interacts with PAX5; the interaction alters DNA-binding properties. Interacts with DAXX. Interacts with UBE2I. Interacts with SP100; the interaction is direct and modulates ETS1 transcriptional activity. In terms of processing, sumoylated on Lys-15 and Lys-227, preferentially with SUMO2; which inhibits transcriptional activity. Post-translationally, ubiquitinated; which induces proteasomal degradation. Phosphorylation at Ser-251, Ser-282 and Ser-285 by CaMK2/CaMKII in response to calcium signaling decreases affinity for DNA: an increasing number of phosphoserines causes DNA-binding to become progressively weaker.

The protein localises to the nucleus. Its subcellular location is the cytoplasm. Autoinhibited by a module composed of four alpha helices (HI-1, HI-2, H4, and H5) that flank the DNA-binding ETS domain, reducing the affinity for DNA. Phosphorylation by CaMK2/CaMKII in response to calcium signaling decreases affinity for DNA. Transcription factor. Directly controls the expression of cytokine and chemokine genes in a wide variety of different cellular contexts. May control the differentiation, survival and proliferation of lymphoid cells. May also regulate angiogenesis through regulation of expression of genes controlling endothelial cell migration and invasion. The polypeptide is Protein C-ets-1 (Ets1) (Rattus norvegicus (Rat)).